The chain runs to 680 residues: Lipase 1 (680 aa).

An N-terminal signal peptide occupies residues 1–34; sequence MKSQNKYSIRKFSVGASSILIATLLFLSGGQAQA. Positions 35–290 are excised as a propeptide; the sequence is AEKQVNMGNS…AKAKDDQTNK (256 aa). Residues 82-259 form a disordered region; the sequence is KNLHNDKTIS…PTKDNDKKNG (178 aa). A compositionally biased stretch (basic and acidic residues) spans 84–112; that stretch reads LHNDKTISEENHRKTDDLNKDQLKDDKKS. The span at 125–138 shows a compositional bias: polar residues; the sequence is KNNNANPSDVNQGL. The span at 148–170 shows a compositional bias: low complexity; sequence SKVASQQQSKEADNSQDSNANNN. A compositionally biased stretch (polar residues) spans 204–223; the sequence is QPQQNNQANDKITNYNFNNE. Residues 224–234 are compositionally biased toward basic and acidic residues; it reads QEVKPQKDEKT. Residues 235-246 show a composition bias toward polar residues; that stretch reads LSVSDLKNNQKS. The active-site Nucleophile is the Ser-408. Residue Asp-600 is the Charge relay system of the active site. Asp-638 is a binding site for Ca(2+). The Charge relay system role is filled by His-639. 3 residues coordinate Ca(2+): Asp-641, Asp-646, and Asp-649.

It belongs to the AB hydrolase superfamily. Lipase family.

It is found in the secreted. The enzyme catalyses a triacylglycerol + H2O = a diacylglycerol + a fatty acid + H(+). The chain is Lipase 1 (lip1) from Staphylococcus aureus (strain MSSA476).